Reading from the N-terminus, the 375-residue chain is MLDLIATRRALHQIPELGMEEFKTHAFLMETIEGLLQDCSFAQVRTWKTGILVYLTGSAPEKTIGWRADIDGLPIVEETGLDFKSLHPDRMHACGHDFHMTIALGLLEKMAEQQPRNNLLFLFQPAEENLAGGMLMYEAGAFGDWLPDEFYGLHVRPDLKVGQMATNRATLFAGTCEVKIRFTGKGGHAAFPYTANDALVAASYFVTQVQSVVSRNVDPIEGAVVTFGSMHAGTTNNVIAETAFLHGTIRALTQNMSLLVQKRVREVAEGIALSFGVDLEIELNPSGYLPVENNPQLADELMTYFDGIDGVEMIDCPPAMTGEDFGYLLNKVPGVMFWLGVDTPYPLHNPRLSPKEEVLPFAVDKLSDFLKMKAN.

D69 is an active-site residue. The active-site Proton acceptor is E128.

The protein belongs to the peptidase M20A family. N-acetyldiaminopimelate deacetylase subfamily.

The catalysed reaction is N-acetyl-(2S,6S)-2,6-diaminopimelate + H2O = (2S,6S)-2,6-diaminopimelate + acetate. It participates in amino-acid biosynthesis; L-lysine biosynthesis via DAP pathway; LL-2,6-diaminopimelate from (S)-tetrahydrodipicolinate (acetylase route): step 3/3. In terms of biological role, catalyzes the conversion of N-acetyl-diaminopimelate to diaminopimelate and acetate. In Streptococcus suis (strain 05ZYH33), this protein is N-acetyldiaminopimelate deacetylase.